The following is a 234-amino-acid chain: Leucyl/phenylalanyl-tRNA--protein transferase (234 aa).

Belongs to the L/F-transferase family.

It is found in the cytoplasm. The catalysed reaction is N-terminal L-lysyl-[protein] + L-leucyl-tRNA(Leu) = N-terminal L-leucyl-L-lysyl-[protein] + tRNA(Leu) + H(+). The enzyme catalyses N-terminal L-arginyl-[protein] + L-leucyl-tRNA(Leu) = N-terminal L-leucyl-L-arginyl-[protein] + tRNA(Leu) + H(+). It catalyses the reaction L-phenylalanyl-tRNA(Phe) + an N-terminal L-alpha-aminoacyl-[protein] = an N-terminal L-phenylalanyl-L-alpha-aminoacyl-[protein] + tRNA(Phe). Functionally, functions in the N-end rule pathway of protein degradation where it conjugates Leu, Phe and, less efficiently, Met from aminoacyl-tRNAs to the N-termini of proteins containing an N-terminal arginine or lysine. The chain is Leucyl/phenylalanyl-tRNA--protein transferase from Shigella boydii serotype 18 (strain CDC 3083-94 / BS512).